The following is a 149-amino-acid chain: MVDDAGTAESQRGKQTPADSLEQLRMLPLPPPQIRIRPWWFPVQELRDPLVFYLEAWLADELFGPDRAMIPEMEWTSQALMTVDIVDSGNLVEITVFGRPSVQNRVKSMLLCLASFHREHRARAEKMKHLEKNLKAHASDPHSPQDPVA.

Residues 1-23 are disordered; the sequence is MVDDAGTAESQRGKQTPADSLEQ. The segment covering 8 to 18 has biased composition (polar residues); that stretch reads AESQRGKQTPA. In terms of domain architecture, KH; atypical spans 49–110; sequence PLVFYLEAWL…SVQNRVKSML (62 aa).

The protein belongs to the KHDC1 family. Component of the subcortical maternal complex (SCMC), at least composed of NLRP5, KHDC3, OOEP, and TLE6. Within the complex, interacts with NLRP5, KHDC3 and TLE6. As part of the SCMC interacts with the SCMC-associated protein NLRP4F. The SCMC may facilitate translocation of its components between the nuclear and cytoplasmic compartments. Forms a scaffold complex with KHDC3/FILIA, and interacts with BLM and TRIM25 at DNA replication forks.

The protein resides in the cytoplasm. Its subcellular location is the nucleus. In terms of biological role, component of the subcortical maternal complex (SCMC), a multiprotein complex that plays a key role in early embryonic development. The SCMC complex is a structural constituent of cytoplasmic lattices, which consist in fibrous structures found in the cytoplasm of oocytes and preimplantation embryos. They are required to store maternal proteins critical for embryonic development, such as proteins that control epigenetic reprogramming of the preimplantation embryo, and prevent their degradation or activation. As part of the OOEP-KHDC3 scaffold, recruits BLM and TRIM25 to DNA replication forks, thereby promoting the ubiquitination of BLM by TRIM25, enhancing BLM retainment at replication forks and therefore promoting stalled replication fork restart. Positively regulates the homologous recombination-mediated DNA double-strand break (DSB) repair pathway by regulating ATM activation and RAD51 recruitment to DSBs in oocytes. Thereby contributes to oocyte survival and the resumption and completion of meiosis. This chain is Oocyte-expressed protein homolog (OOEP), found in Papio anubis (Olive baboon).